The primary structure comprises 485 residues: Proline betaine:corrinoid methyltransferase (485 aa).

This sequence belongs to the trimethylamine methyltransferase family. The proline betaine:THF methyl transfer system is composed of two methyltransferases, MtpB and MtqA, and the corrinoid protein MtqC.

The enzyme catalyses Co(I)-[quaternary-amine-specific corrinoid protein] + L-proline betaine + H(+) = methyl-Co(III)-[quaternary-amine-specific corrinoid protein] + N-methyl-L-proline. Its function is as follows. Involved in the degradation of the quaternary amine L-proline betaine. Component of a corrinoid-dependent methyltransferase system that transfers a methyl group from L-proline betaine to tetrahydrofolate (THF), forming methyl-THF, a key intermediate in the Wood-Ljungdahl acetogenesis pathway. MtpB catalyzes the methylation of the corrinoid protein MtqC, using L-proline betaine as the methyl donor. Shows weak activity with some other quaternary amines, including carnitine, phosphocholine, glycine betaine or betonicine, but cannot methylate free cob(I)alamin. The sequence is that of Proline betaine:corrinoid methyltransferase from Eubacterium limosum.